We begin with the raw amino-acid sequence, 503 residues long: Maturase K (503 aa).

Belongs to the intron maturase 2 family. MatK subfamily.

The protein resides in the plastid. The protein localises to the chloroplast. Its function is as follows. Usually encoded in the trnK tRNA gene intron. Probably assists in splicing its own and other chloroplast group II introns. The protein is Maturase K of Rosa carolina (Pasture rose).